A 524-amino-acid polypeptide reads, in one-letter code: Rho guanine nucleotide exchange factor 3 (524 aa).

Phosphoserine is present on residues serine 46 and serine 69. One can recognise a DH domain in the interval 121–303 (KRQEAIFELS…QGIVAEINTK (183 aa)). Positions 290–448 (INIIQGIVAE…WLNCIRQAKE (159 aa)) constitute a PH domain. A disordered region spans residues 461 to 524 (DSEGLVQGPG…CANSRPEESV (64 aa)). The span at 472–484 (ENREPQGETKLEQ) shows a compositional bias: basic and acidic residues.

As to quaternary structure, interacts with RHOA and RHOB.

The protein localises to the cytoplasm. Acts as a guanine nucleotide exchange factor (GEF) for RhoA and RhoB GTPases. The chain is Rho guanine nucleotide exchange factor 3 (Arhgef3) from Mus musculus (Mouse).